A 465-amino-acid chain; its full sequence is MESLRIYNTLARDKQDFVPRQPGEVRMYVCGITVYDYCHIGHARMVVVFDIVQRWLRAAGYRVTYVRNITDIDDKIIRRALENGETIQSLTRRFIDAMNADFDALGVERPDIEPRATDFIPQMLGMIEKLEANGYAYQAKDGDVNYSVRKFANYGKLSGKSLEDLRAGERVAAKDAKDDPLDFVLWKRAKPEEPAGASWESKYGAGRPGWHIECSAMGCTLLGEHFDIHGGGQDLQFPHHENEIAQSEGATGQTFVNYWMHNGFVQVDSEKMSKSLGNFFTIREVLEKYDAEVVRFFIVRTHYRSPLNYSDVHLDDARASLTRLYTALKDVTPDAAPLDWSEAHAQRFAAAMNDDFNTAVAVAVLFELATEVNRTREPALARQLKRLAGLLGLLGREPREFLQQAAGAARTGALEPDEIEARIAARVAAKQAKNYAEADRIRAELLEAGIALEDKPGGSTEWRRV.

Cys30 provides a ligand contact to Zn(2+). The 'HIGH' region signature appears at 32–42 (ITVYDYCHIGH). Zn(2+) contacts are provided by Cys214, His239, and Glu243. A 'KMSKS' region motif is present at residues 271–275 (KMSKS). Lys274 serves as a coordination point for ATP.

Belongs to the class-I aminoacyl-tRNA synthetase family. In terms of assembly, monomer. Requires Zn(2+) as cofactor.

It is found in the cytoplasm. The catalysed reaction is tRNA(Cys) + L-cysteine + ATP = L-cysteinyl-tRNA(Cys) + AMP + diphosphate. The protein is Cysteine--tRNA ligase of Burkholderia thailandensis (strain ATCC 700388 / DSM 13276 / CCUG 48851 / CIP 106301 / E264).